Here is a 2079-residue protein sequence, read N- to C-terminus: Non-reducing polyketide synthase Dhc5 (2079 aa).

The segment at 9-246 (LLFGDVTDPW…DELNIHALQH (238 aa)) is N-terminal acylcarrier protein transacylase domain (SAT). The region spanning 366–798 (NDGIAIVGMA…GGNACLLLED (433 aa)) is the Ketosynthase family 3 (KS3) domain. Catalysis depends on for beta-ketoacyl synthase activity residues Cys-543, His-678, and His-717. The tract at residues 895–1199 (VFVFTGQGSH…MTHSLQPKTS (305 aa)) is malonyl-CoA:ACP transacylase (MAT) domain. Ser-986 serves as the catalytic For acyl/malonyl transferase activity. The tract at residues 1268 to 1414 (EPLISTCAQY…DPTRSQVEWD (147 aa)) is N-terminal hotdog fold. The region spanning 1268–1584 (EPLISTCAQY…YQELPRATWK (317 aa)) is the PKS/mFAS DH domain. Residues 1304 to 1581 (MDGHKMQGIG…DIRYQELPRA (278 aa)) form a product template (PT) domain region. Residues 1435–1584 (RGHRMQPEVF…YQELPRATWK (150 aa)) form a C-terminal hotdog fold region. The disordered stretch occupies residues 1613–1639 (RELQQPSSATVPAQETTIDEPEQQEGE). Residues 1615–1628 (LQQPSSATVPAQET) show a composition bias toward polar residues. In terms of domain architecture, Carrier spans 1641-1718 (AAGARLFNAI…DLRKEFRANE (78 aa)). Ser-1678 carries the post-translational modification O-(pantetheine 4'-phosphoryl)serine. Residues 1721-1784 (VENPRFSATP…EQKRPVKIDD (64 aa)) form a disordered region. Residues 1727 to 1757 (SATPSSAEASIPSSPSSLAHPMSDSASSLSP) are compositionally biased toward low complexity. The span at 1758–1784 (SDREEALPLERQSMTKREQKRPVKIDD) shows a compositional bias: basic and acidic residues. Residues 1812 to 2057 (ADGTGTIATY…LSVAGDHLDL (246 aa)) form a thioesterase (TE) domain region. The For thioesterase activity role is filled by His-2064.

The protein operates within mycotoxin biosynthesis. Its function is as follows. Highly reducing polyketide synthase; part of the gene cluster that mediates the biosynthesis of 10,11-dehydrocurvularin, a prevalent fungal phytotoxin with heat shock response and immune-modulatory activities. The highly reducing polyketide synthase Dhc3 is responsible for biosynthesis up to the tetraketide stage. The non-reducing polyketide synthase Dhc5 then conducts four additional chain extension cycles, producing the unreduced part of the nascent octaketide from C-1 to C-8 in 10,11-dehydrocurvularin. The chain is Non-reducing polyketide synthase Dhc5 from Alternaria cinerariae.